The following is a 264-amino-acid chain: Triosephosphate isomerase (264 aa).

13–15 (NWK) contacts substrate. The active-site Electrophile is the His-98. Residue Glu-170 is the Proton acceptor of the active site. Residues Gly-176, Ser-216, and 237-238 (GG) each bind substrate.

This sequence belongs to the triosephosphate isomerase family. As to quaternary structure, homodimer.

The protein localises to the cytoplasm. The enzyme catalyses D-glyceraldehyde 3-phosphate = dihydroxyacetone phosphate. It participates in carbohydrate biosynthesis; gluconeogenesis. The protein operates within carbohydrate degradation; glycolysis; D-glyceraldehyde 3-phosphate from glycerone phosphate: step 1/1. Functionally, involved in the gluconeogenesis. Catalyzes stereospecifically the conversion of dihydroxyacetone phosphate (DHAP) to D-glyceraldehyde-3-phosphate (G3P). The protein is Triosephosphate isomerase of Protochlamydia amoebophila (strain UWE25).